A 1162-amino-acid chain; its full sequence is Nucleoporin nup132 (1162 aa).

It belongs to the nucleoporin Nup133 family. In terms of assembly, component of the npc107-120 complex which consists of nup85, nup107, nup120, nup131, nup132 and seh1. Interacts with nup107.

The protein localises to the nucleus envelope. Functions as a component of the nuclear pore complex (NPC). NPC components, collectively referred to as nucleoporins (NUPs), can play the role of both NPC structural components and of docking or interaction partners for transiently associated nuclear transport factors. Active directional transport is assured by both, a Phe-Gly (FG) repeat affinity gradient for these transport factors across the NPC and a transport cofactor concentration gradient across the nuclear envelope. The protein is Nucleoporin nup132 (nup132) of Schizosaccharomyces pombe (strain 972 / ATCC 24843) (Fission yeast).